Consider the following 253-residue polypeptide: Tryptophan synthase alpha chain (253 aa).

Catalysis depends on proton acceptor residues Glu47 and Asp58.

It belongs to the TrpA family. In terms of assembly, tetramer of two alpha and two beta chains.

The catalysed reaction is (1S,2R)-1-C-(indol-3-yl)glycerol 3-phosphate + L-serine = D-glyceraldehyde 3-phosphate + L-tryptophan + H2O. Its pathway is amino-acid biosynthesis; L-tryptophan biosynthesis; L-tryptophan from chorismate: step 5/5. The alpha subunit is responsible for the aldol cleavage of indoleglycerol phosphate to indole and glyceraldehyde 3-phosphate. This is Tryptophan synthase alpha chain from Syntrophotalea carbinolica (strain DSM 2380 / NBRC 103641 / GraBd1) (Pelobacter carbinolicus).